We begin with the raw amino-acid sequence, 278 residues long: MQLILISGLAGSGKSIALNVLEDSGYSCIDNLPLTLVPDTVERLAPLGYEQLAISIDTRDGASRLLEVIHALETAGHNVRFLFLEARTDTLIRRFSETRRRHPLSRTALTIPEAIARERQLLQAIAGLGHRIDTSDLSPNQLRRYLRDVIAQAPGRMLVVIQSFGFKHGVPLDADFVFDVRCLPNPYYDPALRPFTGRDAPIINFLTAEPLVQAMADELSGLALRWIPVFRHDNRNYLTFAIGCTGGQHRSVYLAETLAARLRETGETVLLRHRELDR.

8–15 lines the ATP pocket; the sequence is GLAGSGKS. 57–60 contacts GTP; that stretch reads DTRD.

The protein belongs to the RapZ-like family.

In terms of biological role, displays ATPase and GTPase activities. The chain is Nucleotide-binding protein LHK_02029 from Laribacter hongkongensis (strain HLHK9).